Consider the following 756-residue polypeptide: MTISPPEREKKVRVVVDNDPVPTSFERWAKPGHFDRTLARGPQTTTWIWNLHALAHDFDTHTDSSLEDVSRKIFSAHFGHLAVIFVWLSGMYFHGAKFSNYSAWLADPTRVKPSAQVVWPIVGQGILNGDVGGGFHGIQITSGLFQLWRASGITNEFQLYVTAIGGLVMAGLMLFAGWFHYHKRAPKLEWFQNVESMMNHHLAGLLGLGSLGWAGHQIHVSLPINKLLDAGVAAKDIPLPHEFILNPTLMSELYPKVEWGVMKGVIPFFTLNWGAYSDFLTFKGGLNPVTGGLWLSDTAHHHLAIAVLFIIAGHMYRTNWGIGHSMKEILEAHKGPFTGEGHKGLYETLTTSWHAQLAINLAMMGSLSIIVAHHMYSMPPYPYLATDYPTQLSLFTHHMWIGGFLIVGGAAHGAIYMVRDYDPVVNQNNLLDRVIRHRDAIISHLNWVCIFLGFHSFGLYIHNDTMRAFGRPQDMFSDTAIQLQPVFAQWVQNLHTLAPGGTAPNALEPVSYAFGGGVVAVGGKVAMMPIALGTADFLVHHIHAFTIHVTVLILLKGVLFARSSRLIPDKANLGFRFPCDGPGRGGTCQVSGWDHVFLGLFWMYNSLSIVIFHFSWKMQSDVWGTVAPDGTVTHITGGNFAQSALTINGWLRDFLWAQAAQVIGSYGSALSAYGLLFLGAHFVWAFSLMFLFSGRGYWQELIESIVWAHNKLKVAPSIQPRALSIIQGRAVGVAHYLLGGIATTWAFFLARIIAVG.

The next 8 membrane-spanning stretches (helical) occupy residues 73-96 (IFSA…FHGA), 159-182 (LYVT…FHYH), 198-222 (MNHH…HVSL), 298-316 (TAHH…GHMY), 353-376 (WHAQ…HHMY), 392-418 (LSLF…IYMV), 440-462 (AIIS…LYIH), and 537-555 (FLVH…LILL). Residues Cys-579 and Cys-588 each coordinate [4Fe-4S] cluster. 2 consecutive transmembrane segments (helical) span residues 595–616 (HVFL…HFSW) and 670–692 (LSAY…MFLF). Chlorophyll a' is bound at residue His-681. Residues Met-689 and Tyr-697 each contribute to the chlorophyll a site. Trp-698 is a binding site for phylloquinone. A helical transmembrane segment spans residues 730–750 (AVGVAHYLLGGIATTWAFFLA).

The protein belongs to the PsaA/PsaB family. In terms of assembly, the PsaA/B heterodimer binds the P700 chlorophyll special pair and subsequent electron acceptors. PSI consists of a core antenna complex that captures photons, and an electron transfer chain that converts photonic excitation into a charge separation. The cyanobacterial PSI reaction center is composed of one copy each of PsaA,B,C,D,E,F,I,J,K,L,M and X, and forms trimeric complexes. PSI electron transfer chain: 5 chlorophyll a, 1 chlorophyll a', 2 phylloquinones and 3 4Fe-4S clusters. PSI core antenna: 90 chlorophyll a, 22 carotenoids, 3 phospholipids and 1 galactolipid. P700 is a chlorophyll a/chlorophyll a' dimer, A0 is one or more chlorophyll a, A1 is one or both phylloquinones and FX is a shared 4Fe-4S iron-sulfur center. is required as a cofactor.

It is found in the cellular thylakoid membrane. It carries out the reaction reduced [plastocyanin] + hnu + oxidized [2Fe-2S]-[ferredoxin] = oxidized [plastocyanin] + reduced [2Fe-2S]-[ferredoxin]. PsaA and PsaB bind P700, the primary electron donor of photosystem I (PSI), as well as the electron acceptors A0, A1 and FX. PSI is a plastocyanin/cytochrome c6-ferredoxin oxidoreductase, converting photonic excitation into a charge separation, which transfers an electron from the donor P700 chlorophyll pair to the spectroscopically characterized acceptors A0, A1, FX, FA and FB in turn. Oxidized P700 is reduced on the lumenal side of the thylakoid membrane by plastocyanin or cytochrome c6. The protein is Photosystem I P700 chlorophyll a apoprotein A1 of Cyanothece sp. (strain PCC 7425 / ATCC 29141).